Reading from the N-terminus, the 365-residue chain is Peptide chain release factor 2 (365 aa).

Gln-251 carries the post-translational modification N5-methylglutamine.

This sequence belongs to the prokaryotic/mitochondrial release factor family. Methylated by PrmC. Methylation increases the termination efficiency of RF2.

The protein localises to the cytoplasm. In terms of biological role, peptide chain release factor 2 directs the termination of translation in response to the peptide chain termination codons UGA and UAA. The protein is Peptide chain release factor 2 of Campylobacter jejuni subsp. jejuni serotype O:6 (strain 81116 / NCTC 11828).